The sequence spans 93 residues: MSRSLKKGPFIHQGLLKKIEEMNAKNEKKVIKTWSRASTIFPQMIGHTIAVHDGRKHVPVYVTEDMVGHKLGEFALTRTYRGHDDNEKTTKRK.

Belongs to the universal ribosomal protein uS19 family.

In terms of biological role, protein S19 forms a complex with S13 that binds strongly to the 16S ribosomal RNA. The polypeptide is Small ribosomal subunit protein uS19 (Alkaliphilus oremlandii (strain OhILAs) (Clostridium oremlandii (strain OhILAs))).